A 356-amino-acid chain; its full sequence is Poly(rC)-binding protein 1 (356 aa).

N-acetylmethionine is present on Met1. 2 KH domains span residues 13 to 75 and 97 to 162; these read TLTI…FAMI and PVTL…VKQI. Lys115 participates in a covalent cross-link: Glycyl lysine isopeptide (Lys-Gly) (interchain with G-Cter in SUMO2). Phosphoserine occurs at positions 173, 189, 190, 246, 264, and 273. The 65-residue stretch at 279 to 343 folds into the KH 3 domain; it reads QTTHELTIPN…ASISLAQYLI (65 aa).

Post-translationally, phosphorylated; lowers poly(rC)-binding activity.

It is found in the nucleus. It localises to the cytoplasm. Functionally, single-stranded nucleic acid binding protein that binds preferentially to oligo dC. Together with PCBP2, required for erythropoiesis, possibly by regulating mRNA splicing. In Bos taurus (Bovine), this protein is Poly(rC)-binding protein 1 (PCBP1).